The sequence spans 239 residues: MGLIWLLLLSLLEPGWPAAGPGARLRRDAGGRGGVYEHLGGAPRRRKLYCATKYHLQLHPSGRVNGSLENSAYSILEITAVEVGIVAIRGLFSGRYLAMNKRGRLYASEHYSAECEFVERIHELGYNTYASRLYRTVSSTPGARRQPSAERLWYVSVNGKGRPRRGFKTRRTQKSSLFLPRVLDHRDHEMVRQLQSGLPRPPGKGVQPRRRRQKQSPDNLEPSHVQASRLGSQLEASAH.

The signal sequence occupies residues 1–17 (MGLIWLLLLSLLEPGWP). N-linked (GlcNAc...) asparagine glycosylation is present at Asn65. The segment at 193–239 (QLQSGLPRPPGKGVQPRRRRQKQSPDNLEPSHVQASRLGSQLEASAH) is disordered. A compositionally biased stretch (polar residues) spans 225–239 (VQASRLGSQLEASAH).

Belongs to the heparin-binding growth factors family. In terms of assembly, interacts with FGFR1 and FGFR2. Affinity between fibroblast growth factors (FGFs) and their receptors is increased by heparan sulfate glycosaminoglycans that function as coreceptors.

The protein localises to the secreted. Functionally, plays an important role in the regulation of embryonic development, cell proliferation, and cell differentiation. Required for normal ear development. The chain is Fibroblast growth factor 3 (FGF3) from Homo sapiens (Human).